We begin with the raw amino-acid sequence, 55 residues long: Large ribosomal subunit protein bL33 (55 aa).

Belongs to the bacterial ribosomal protein bL33 family.

This chain is Large ribosomal subunit protein bL33, found in Maricaulis maris (strain MCS10) (Caulobacter maris).